Consider the following 212-residue polypeptide: Cytidylate kinase (212 aa).

7-15 lines the ATP pocket; the sequence is GPAASGKGT.

This sequence belongs to the cytidylate kinase family. Type 1 subfamily.

It is found in the cytoplasm. It carries out the reaction CMP + ATP = CDP + ADP. The enzyme catalyses dCMP + ATP = dCDP + ADP. The chain is Cytidylate kinase from Rhodopseudomonas palustris (strain BisB18).